A 587-amino-acid chain; its full sequence is APOBEC1 complementation factor (587 aa).

RRM domains lie at 56–134 (CEIF…ASVD), 136–218 (CRLF…WAEP), and 231–303 (KILY…LAKP). The interval 360–409 (HFPATKGHLSNRAIIRAPSVRGAAGVRGLGGRGYLAYTGLGRGYQVKGDK) is required for nuclear localization. Thr491 bears the Phosphothreonine mark.

In terms of assembly, part of the apolipoprotein B mRNA editing complex with APOBEC1. Interacts with TNPO2; TNPO2 may be responsible for transport of A1CF into the nucleus. Interacts with SYNCRIP. Interacts with CELF2/CUGBP2. Interacts with RBM47.

Its subcellular location is the nucleus. It localises to the endoplasmic reticulum. The protein localises to the cytoplasm. In terms of biological role, essential component of the apolipoprotein B mRNA editing enzyme complex which is responsible for the postranscriptional editing of a CAA codon for Gln to a UAA codon for stop in APOB mRNA. Binds to APOB mRNA and is probably responsible for docking the catalytic subunit, APOBEC1, to the mRNA to allow it to deaminate its target cytosine. The complex also seems to protect the edited APOB mRNA from nonsense-mediated decay. The polypeptide is APOBEC1 complementation factor (A1CF) (Pongo abelii (Sumatran orangutan)).